The chain runs to 225 residues: NAD(P)H-hydrate epimerase (225 aa).

A YjeF N-terminal domain is found at Met9–Phe209. Position 57 to 61 (Asn57 to Asp61) interacts with (6S)-NADPHX. Positions 58 and 119 each coordinate K(+). Residues Gly123–Leu129 and Asp152 each bind (6S)-NADPHX. Thr155 provides a ligand contact to K(+).

Belongs to the NnrE/AIBP family. The cofactor is K(+).

It catalyses the reaction (6R)-NADHX = (6S)-NADHX. The enzyme catalyses (6R)-NADPHX = (6S)-NADPHX. In terms of biological role, catalyzes the epimerization of the S- and R-forms of NAD(P)HX, a damaged form of NAD(P)H that is a result of enzymatic or heat-dependent hydration. This is a prerequisite for the S-specific NAD(P)H-hydrate dehydratase to allow the repair of both epimers of NAD(P)HX. This is NAD(P)H-hydrate epimerase from Leuconostoc kimchii (strain IMSNU 11154 / KCTC 2386 / IH25).